The primary structure comprises 854 residues: Discoidin domain-containing receptor 2 (854 aa).

The first 21 residues, 1-21, serve as a signal peptide directing secretion; sequence MIPIPRMPLVLLLLLLILGSA. Residues 22-399 lie on the Extracellular side of the membrane; it reads KAQVNPAICR…MLKVDDSNTR (378 aa). In terms of domain architecture, F5/8 type C spans 30-185; sequence CRYPLGMSGG…VCMRVELYGC (156 aa). Intrachain disulfides connect Cys-30-Cys-185 and Cys-73-Cys-177. N-linked (GlcNAc...) asparagine glycosylation is found at Asn-121, Asn-213, Asn-261, Asn-280, and Asn-372. The chain crosses the membrane as a helical span at residues 400–421; that stretch reads ILIGCLVAIIFILLAIIVIILW. Residues 422 to 854 lie on the Cytoplasmic side of the membrane; sequence RQFWQKMLEK…HLLLLQQGAE (433 aa). A disordered region spans residues 452 to 471; the sequence is SMFNNNRSSSPSEQESNSTY. Over residues 455–469 the composition is skewed to low complexity; the sequence is NNNRSSSPSEQESNS. Residue Tyr-471 is modified to Phosphotyrosine; by SRC and autocatalysis. Positions 563–848 constitute a Protein kinase domain; it reads LAFKEKLGEG…PSFQEIHLLL (286 aa). Residues 569-577 and Lys-608 each bind ATP; that span reads LGEGQFGEV. Asp-709 functions as the Proton acceptor in the catalytic mechanism. Phosphotyrosine; by SRC and autocatalysis occurs at positions 735, 739, and 740.

This sequence belongs to the protein kinase superfamily. Tyr protein kinase family. Insulin receptor subfamily. Binds hydroxyproline-rich sequence motifs in fibrillar, glycosylated collagen, such as the GQOGVMGFO motif, where O stands for hydroxyproline. Interacts with SRC. Interacts (tyrosine phosphorylated) with SHC1. In terms of processing, N-glycosylated. Tyrosine phosphorylated in response to collagen binding. Phosphorylated by SRC; this is required for activation and subsequent autophosphorylation on additional tyrosine residues. As to expression, widely expressed. Detected in lung, ovary, skin and in testis Leydig cells (at protein level). Widely expressed. Detected at high levels in heart, lung, skeletal muscle, central nervous system (CNS) and kidney, and at lower levels in brain and testis. Detected in chondrocytes in tibia growth plates of young mice.

The protein localises to the cell membrane. It catalyses the reaction L-tyrosyl-[protein] + ATP = O-phospho-L-tyrosyl-[protein] + ADP + H(+). Its activity is regulated as follows. Present in an inactive state in the absence of collagen binding and phosphorylation by SRC. Tyrosine phosphorylation enhances the affinity for ATP and the catalytic activity. Functionally, tyrosine kinase that functions as a cell surface receptor for fibrillar collagen and regulates cell differentiation, remodeling of the extracellular matrix, cell migration and cell proliferation. Required for normal bone development. Regulates osteoblast differentiation and chondrocyte maturation via a signaling pathway that involves MAP kinases and leads to the activation of the transcription factor RUNX2. Regulates remodeling of the extracellular matrix by up-regulation of the collagenases MMP1, MMP2 and MMP13, and thereby facilitates cell migration and tumor cell invasion. Promotes fibroblast migration and proliferation, and thereby contributes to cutaneous wound healing. The chain is Discoidin domain-containing receptor 2 (Ddr2) from Mus musculus (Mouse).